The primary structure comprises 330 residues: Formylaminopyrimidine-binding protein (330 aa).

The signal sequence occupies residues 1–18 (MKSFKIISLLLAILFLAS). C19 carries the N-palmitoyl cysteine lipid modification. C19 is lipidated: S-diacylglycerol cysteine. Substrate-binding positions include 38 to 39 (DW), Y90, N145, Y188, and E192.

This sequence belongs to the NMT1 family. In terms of assembly, the complex is likely composed of an ATP-binding protein (ThiZ), a transmembrane protein (ThiX) and a solute-binding protein (ThiY).

It localises to the cell membrane. It participates in cofactor biosynthesis; thiamine diphosphate biosynthesis. In terms of biological role, participates in a thiamine pyrimidine salvage pathway as part of the ABC transporter complex ThiXYZ involved in the import of thiamine degradation products. Binds the formylaminopyrimidine N-formyl-4-amino-5-aminomethyl-2-methylpyrimidine (FAMP). Does not bind thiamine. The sequence is that of Formylaminopyrimidine-binding protein from Halalkalibacterium halodurans (strain ATCC BAA-125 / DSM 18197 / FERM 7344 / JCM 9153 / C-125) (Bacillus halodurans).